Reading from the N-terminus, the 458-residue chain is Probable asparagine--tRNA ligase, cytoplasmic (458 aa).

Belongs to the class-II aminoacyl-tRNA synthetase family.

It localises to the cytoplasm. It catalyses the reaction tRNA(Asn) + L-asparagine + ATP = L-asparaginyl-tRNA(Asn) + AMP + diphosphate + H(+). The chain is Probable asparagine--tRNA ligase, cytoplasmic from Enterocytozoon bieneusi (strain H348) (Microsporidian parasite).